The primary structure comprises 66 residues: Large ribosomal subunit protein bL35 (66 aa).

The protein belongs to the bacterial ribosomal protein bL35 family.

The polypeptide is Large ribosomal subunit protein bL35 (Cereibacter sphaeroides (strain ATCC 17029 / ATH 2.4.9) (Rhodobacter sphaeroides)).